We begin with the raw amino-acid sequence, 400 residues long: uncharacterized protein (400 aa).

Position 36-43 (36-43 (GSINSGKT)) interacts with ATP.

It belongs to the archaeal ATPase family.

This is an uncharacterized protein from Methanocaldococcus jannaschii (strain ATCC 43067 / DSM 2661 / JAL-1 / JCM 10045 / NBRC 100440) (Methanococcus jannaschii).